The following is a 244-amino-acid chain: tRNA (guanine-N(1)-)-methyltransferase (244 aa).

S-adenosyl-L-methionine contacts are provided by residues glycine 123 and 143–148; that span reads LGDFVM.

It belongs to the RNA methyltransferase TrmD family. As to quaternary structure, homodimer.

It is found in the cytoplasm. The catalysed reaction is guanosine(37) in tRNA + S-adenosyl-L-methionine = N(1)-methylguanosine(37) in tRNA + S-adenosyl-L-homocysteine + H(+). Specifically methylates guanosine-37 in various tRNAs. This chain is tRNA (guanine-N(1)-)-methyltransferase, found in Ruegeria sp. (strain TM1040) (Silicibacter sp.).